The chain runs to 538 residues: Putative cysteine ligase BshC (538 aa).

A coiled-coil region spans residues 462 to 533 (LDHLEKRLLK…DPLESNFKIL (72 aa)).

It belongs to the BshC family.

The sequence is that of Putative cysteine ligase BshC from Christiangramia forsetii (strain DSM 17595 / CGMCC 1.15422 / KT0803) (Gramella forsetii).